Consider the following 331-residue polypeptide: Glycerophosphodiester phosphodiesterase 1 (331 aa).

The Cytoplasmic segment spans residues 1–3 (MWL). Residues 4-24 (WEDQGGLLGPFSFVLVLLLVV) traverse the membrane as a helical segment. The Lumenal portion of the chain corresponds to 25–248 (TRSPFNACVL…PRYSVFWKQS (224 aa)). A GP-PDE domain is found at 65-331 (VSAIAHRGGS…SMLEDCAPHF (267 aa)). Residues Glu-97 and Asp-99 each contribute to the Mg(2+) site. Asn-168 is a glycosylation site (N-linked (GlcNAc...) asparagine). Asp-174 is a binding site for Mg(2+). A helical membrane pass occupies residues 249-269 (VFVVLDILLDWSMHNVLWYLC). The Cytoplasmic segment spans residues 270–331 (GISAFLMQKD…SMLEDCAPHF (62 aa)).

The protein belongs to the glycerophosphoryl diester phosphodiesterase family. Interacts with PRAF2. Interacts with RGS16. Mg(2+) is required as a cofactor. In terms of processing, N-glycosylated. Widely expressed. Highly expressed in the brain and spinal cord, followed by kidney, liver, and testis. In contrast, little or no expression is detected in the heart or spleen.

It localises to the cell membrane. The protein localises to the cytoplasmic vesicle membrane. The catalysed reaction is sn-glycero-3-phospho-1D-myo-inositol + H2O = myo-inositol + sn-glycerol 3-phosphate + H(+). The enzyme catalyses 1-O-(1Z-octadecenyl)-sn-glycero-3-phospho-(N-5Z,8Z,11Z,14Z-eicosatetraenoyl)-ethanolamine + H2O = 1-O-(1Z-octadecenyl)-sn-glycero-3-phosphate + N-(5Z,8Z,11Z,14Z-eicosatetraenoyl)-ethanolamine + H(+). It catalyses the reaction 1-O-(1Z-octadecenyl)-sn-glycero-3-phospho-(N-9Z-octadecenoyl)-ethanolamine + H2O = 1-O-(1Z-octadecenyl)-sn-glycero-3-phosphate + N-(9Z-octadecenoyl) ethanolamine + H(+). It carries out the reaction 1-O-(1Z-octadecenyl)-sn-glycero-3-phospho-N-hexadecanoyl-ethanolamine + H2O = 1-O-(1Z-octadecenyl)-sn-glycero-3-phosphate + N-hexadecanoylethanolamine + H(+). The catalysed reaction is N-(4Z,7Z,10Z,13Z,16Z,19Z)-docosahexaenoyl-sn-glycero-3-phosphoethanolamine + H2O = N-(4Z,7Z,10Z,13Z,16Z,19Z)-docosahexaenoyl ethanolamine + sn-glycerol 3-phosphate + H(+). The enzyme catalyses N-eicosanoyl-sn-glycero-3-phosphoethanolamine + H2O = N-eicosanoyl ethanolamine + sn-glycerol 3-phosphate + H(+). It catalyses the reaction N-hexadecanoyl-sn-glycero-3-phosphoethanolamine + H2O = N-hexadecanoylethanolamine + sn-glycerol 3-phosphate + H(+). It carries out the reaction N-(9Z-octadecenoyl)-sn-glycero-3-phosphoethanolamine + H2O = N-(9Z-octadecenoyl) ethanolamine + sn-glycerol 3-phosphate + H(+). The catalysed reaction is N-(5Z,8Z,11Z,14Z-eicosatetraenoyl)-sn-glycero-3-phosphoethanolamine + H2O = N-(5Z,8Z,11Z,14Z-eicosatetraenoyl)-ethanolamine + sn-glycerol 3-phosphate + H(+). Inhibited by EDTA, calcium chloride, and zinc chloride. Enhanced by magnesium chloride. Glycerophosphodiester phosphodiesterase activity can be modulated by G-protein signaling pathways. Hydrolyzes the phosphodiester bond of glycerophosphodiesters such as glycerophosphoinositol (GroPIns) and glycerophosphoethanolamine (GroPEth), to yield a glycerol phosphate and an alcohol. Hydrolyzes glycerophospho-N-acylethanolamines to N-acylethanolamines in the brain and participates in bioactive N-acylethanolamine biosynthesis such as anandamide (an endocannabinoid), N-palmitoylethanolamine (an anti-inflammatory), and N-oleoylethanolamine (an anorexic). In addition, has a lysophospholipase D activity by hydrolyzing N-acyl-lysoplasmenylethanolamine (N-acyl-lysoPlsEt) to N-acylethanolamine. However lysophospholipase D activity is lower than glycerophosphodiester phosphodiesterase activity. Has little or no activity towards glycerophosphocholine. This chain is Glycerophosphodiester phosphodiesterase 1, found in Mus musculus (Mouse).